A 71-amino-acid chain; its full sequence is Metallothionein-like protein 1 (71 aa).

It belongs to the metallothionein superfamily. Type 15 family.

Metallothioneins have a high content of cysteine residues that bind various heavy metals. The protein is Metallothionein-like protein 1 (MT1) of Casuarina glauca (Swamp oak).